Consider the following 143-residue polypeptide: MSTKKVYSFLSQAFIFSAIMLISNIIATHLPIPMPSSVIGLVILFSLLCLKVIKLEQVESLGTALTGIIGFLFVPSGISVINSFGVMGQYFVQILTVIVVATVILLAVTGLFAQFILGKDEKETEDTKELKVVNKGRKHGKVA.

4 helical membrane passes run Val6–Ile26, Leu30–Leu50, Leu61–Ile81, and Val97–Leu117.

It belongs to the CidA/LrgA family. LrgA subfamily.

The protein resides in the cell membrane. Inhibits the expression or activity of extracellular murein hydrolases by interacting, possibly with LrgB, with the holin-like protein CidA. The LrgAB and CidA proteins may affect the proton motive force of the membrane. May be involved in programmed cell death (PCD), possibly triggering PCD in response to antibiotics and environmental stresses. The chain is Antiholin-like protein LrgA from Bacillus cereus (strain AH820).